We begin with the raw amino-acid sequence, 317 residues long: Ciliary microtubule inner protein 2A (317 aa).

The tract at residues 131-153 is disordered; it reads TPDTPHPPCPPGRKGDSRDLGHP.

The protein belongs to the CIMIP2 family. Microtubule inner protein component of sperm flagellar doublet microtubules.

The protein resides in the cytoplasm. The protein localises to the cytoskeleton. It localises to the flagellum axoneme. Its function is as follows. Microtubule inner protein (MIP) part of the dynein-decorated doublet microtubules (DMTs) in flagellum axoneme. Binds to the intra-tubulin interfaces. The polypeptide is Ciliary microtubule inner protein 2A (Homo sapiens (Human)).